The chain runs to 547 residues: Inositol-tetrakisphosphate 1-kinase 6 (547 aa).

Lys-263 is a binding site for 1D-myo-inositol 1,3,4-trisphosphate. ATP is bound by residues Arg-317 and Lys-370. The region spanning 327-539 is the ATP-grasp domain; sequence LEGLSAEGRP…FWDAIKQSYE (213 aa). 1D-myo-inositol 1,3,4-trisphosphate contacts are provided by His-381 and Lys-415. Residues 404–415, Ser-430, and Ser-450 each bind ATP; that span reads QEYIDHGSKIFK. Asp-497, Asp-511, and Asn-513 together coordinate Mg(2+). 1D-myo-inositol 1,3,4-trisphosphate is bound by residues Asn-513 and Ser-517.

The protein belongs to the ITPK1 family. As to quaternary structure, monomer. The cofactor is Mg(2+).

It catalyses the reaction 1D-myo-inositol 3,4,5,6-tetrakisphosphate + ATP = 1D-myo-inositol 1,3,4,5,6-pentakisphosphate + ADP + H(+). It carries out the reaction 1D-myo-inositol 1,3,4-trisphosphate + ATP = 1D-myo-inositol 1,3,4,5-tetrakisphosphate + ADP + H(+). The catalysed reaction is 1D-myo-inositol 1,3,4-trisphosphate + ATP = 1D-myo-inositol 1,3,4,6-tetrakisphosphate + ADP + H(+). In terms of biological role, kinase that can phosphorylate various inositol polyphosphate such as Ins(3,4,5,6)P4 or Ins(1,3,4)P3 and participates in phytic acid biosynthesis in developing seeds. Phytic acid is the primary storage form of phosphorus in cereal grains and other plant seeds. In Oryza sativa subsp. indica (Rice), this protein is Inositol-tetrakisphosphate 1-kinase 6.